The following is a 255-amino-acid chain: Large ribosomal subunit protein uL4 (255 aa).

Belongs to the universal ribosomal protein uL4 family. As to quaternary structure, part of the 50S ribosomal subunit.

In terms of biological role, one of the primary rRNA binding proteins, this protein initially binds near the 5'-end of the 23S rRNA. It is important during the early stages of 50S assembly. It makes multiple contacts with different domains of the 23S rRNA in the assembled 50S subunit and ribosome. Functionally, forms part of the polypeptide exit tunnel. The sequence is that of Large ribosomal subunit protein uL4 from Thermococcus kodakarensis (strain ATCC BAA-918 / JCM 12380 / KOD1) (Pyrococcus kodakaraensis (strain KOD1)).